Here is a 628-residue protein sequence, read N- to C-terminus: tRNA uridine 5-carboxymethylaminomethyl modification enzyme MnmG (628 aa).

13-18 serves as a coordination point for FAD; the sequence is GAGHAG. 273 to 287 contacts NAD(+); sequence GPRYCPSIEDKIVRF.

This sequence belongs to the MnmG family. Homodimer. Heterotetramer of two MnmE and two MnmG subunits. FAD is required as a cofactor.

The protein resides in the cytoplasm. Functionally, NAD-binding protein involved in the addition of a carboxymethylaminomethyl (cmnm) group at the wobble position (U34) of certain tRNAs, forming tRNA-cmnm(5)s(2)U34. The protein is tRNA uridine 5-carboxymethylaminomethyl modification enzyme MnmG of Buchnera aphidicola subsp. Acyrthosiphon pisum (strain Tuc7).